Consider the following 183-residue polypeptide: MSQYSGKIVFFEGKCFTGRRLEVFGDCDNFQDRGFMNRVNSIRVESGAWVCFDHPDFKGQQYMLEKGEYPDFQRWNGHNDHMGSCKPIKMHGEQYRMELFEGQNFTGQCVELCDDCPFLQSTGFSKNCLNSIKVYGDGAWAMYEEPNYRGRMYIVERGNYCAFTEWQSENPNIQSIRRVVNYF.

4 consecutive Beta/gamma crystallin 'Greek key' domains span residues 6-46 (GKIV…RVES), 47-89 (GAWV…KPIK), 95-136 (YRME…KVYG), and 138-180 (GAWA…RRVV).

Belongs to the beta/gamma-crystallin family. Monomer.

Functionally, crystallins are the dominant structural components of the vertebrate eye lens. In Danio rerio (Zebrafish), this protein is Gamma-crystallin N-A (crygna).